The primary structure comprises 181 residues: Mitochondrial inner membrane protein Mpv17 (181 aa).

4 consecutive transmembrane segments (helical) span residues 20 to 37, 51 to 67, 86 to 103, and 152 to 169; these read MCIA…AQYL, FSFL…FIWF, LCID…AILF, and VILN…LSYI.

The protein belongs to the peroxisomal membrane protein PXMP2/4 family.

Its subcellular location is the mitochondrion inner membrane. Functionally, involved in mitochondria homeostasis. This Caenorhabditis elegans protein is Mitochondrial inner membrane protein Mpv17.